Consider the following 30-residue polypeptide: Hainantoxin F7-28.42 (30 aa).

In terms of tissue distribution, expressed by the venom gland.

The protein resides in the secreted. The sequence is that of Hainantoxin F7-28.42 from Cyriopagopus hainanus (Chinese bird spider).